Reading from the N-terminus, the 133-residue chain is MATIQVSVITPDGAVYEGDAELVVVKTVEGELGIKAKHIPLVSPLAVGPARFIKEGKEEQVAVSSGFVEVRPDHVSILAEAAERPEQIDTERARKAKERAEQRLASEHVDRKRAEAALQRAITRMDVAKHKGA.

The segment at 81-110 is disordered; it reads AAERPEQIDTERARKAKERAEQRLASEHVD.

This sequence belongs to the ATPase epsilon chain family. F-type ATPases have 2 components, CF(1) - the catalytic core - and CF(0) - the membrane proton channel. CF(1) has five subunits: alpha(3), beta(3), gamma(1), delta(1), epsilon(1). CF(0) has three main subunits: a, b and c.

It is found in the cell membrane. Produces ATP from ADP in the presence of a proton gradient across the membrane. The sequence is that of ATP synthase epsilon chain from Shouchella clausii (strain KSM-K16) (Alkalihalobacillus clausii).